A 544-amino-acid polypeptide reads, in one-letter code: Lysophosphatidylcholine acyltransferase 2 (544 aa).

The Cytoplasmic portion of the chain corresponds to 1–58 (MNRCAEAAAVAATVPGSGVGDSGLRPPMVPRQASFFPPPVPNPFVQQTRISAARRLQM). A helical; Signal-anchor for type II membrane protein membrane pass occupies residues 59–79 (ILLGIILLPVRALLVGLVLLL). Residues 80–544 (AWPFAVISTV…EEGTSGKKVD (465 aa)) lie on the Lumenal side of the membrane. Positions 146-151 (HSTFFD) match the HXXXXD motif motif. An EGTC motif motif is present at residues 220–223 (EGTC). EF-hand domains are found at residues 391 to 426 (PVSD…LCNP) and 428 to 463 (NTED…SLGV). Residues aspartate 404, asparagine 406, aspartate 408, serine 410, glutamate 415, aspartate 441, aspartate 443, aspartate 445, tyrosine 447, and glutamate 452 each coordinate Ca(2+). A compositionally biased stretch (polar residues) spans 520 to 530 (TAPSVASNKVS). A disordered region spans residues 520 to 544 (TAPSVASNKVSPESHEEGTSGKKVD). Positions 531-544 (PESHEEGTSGKKVD) are enriched in basic and acidic residues.

The protein belongs to the 1-acyl-sn-glycerol-3-phosphate acyltransferase family.

It localises to the endoplasmic reticulum membrane. It is found in the golgi apparatus membrane. The protein resides in the cell membrane. Its subcellular location is the lipid droplet. It catalyses the reaction a 1-acyl-sn-glycero-3-phosphocholine + an acyl-CoA = a 1,2-diacyl-sn-glycero-3-phosphocholine + CoA. The enzyme catalyses a 1-O-alkyl-sn-glycero-3-phosphocholine + acetyl-CoA = a 1-O-alkyl-2-acetyl-sn-glycero-3-phosphocholine + CoA. It carries out the reaction a 1-acyl-sn-glycero-3-phosphate + an acyl-CoA = a 1,2-diacyl-sn-glycero-3-phosphate + CoA. The catalysed reaction is a 1-O-(1Z-alkenyl)-sn-glycero-3-phosphocholine + an acyl-CoA = a 1-O-(1Z-alkenyl)-2-acyl-sn-glycero-3-phosphocholine + CoA. It catalyses the reaction 1-hexadecanoyl-sn-glycero-3-phosphate + (9Z)-octadecenoyl-CoA = 1-hexadecanoyl-2-(9Z-octadecenoyl)-sn-glycero-3-phosphate + CoA. The enzyme catalyses 1-(9Z-octadecenoyl)-sn-glycero-3-phosphate + (9Z)-octadecenoyl-CoA = 1,2-di-(9Z-octadecenoyl)-sn-glycero-3-phosphate + CoA. It carries out the reaction 1-(9Z-octadecenoyl)-sn-glycero-3-phosphate + hexadecanoyl-CoA = 1-(9Z)-octadecenoyl-2-hexadecanoyl-sn-glycero-3-phosphate + CoA. The catalysed reaction is 1-heptadecanoyl-sn-glycero-3-phosphate + (9Z)-octadecenoyl-CoA = 1-heptadecanoyl-2-(9Z)-octadecenoyl-sn-glycero-3-phosphate + CoA. It catalyses the reaction 1-octadecanoyl-sn-glycero-3-phosphate + (9Z)-octadecenoyl-CoA = 1-octadecanoyl-2-(9Z-octadecenoyl)-sn-glycero-3-phosphate + CoA. The enzyme catalyses heptadecanoyl-CoA + 1-(9Z-octadecenoyl)-sn-glycero-3-phosphate = 1-(9Z)-octadecenoyl-2-heptadecanoyl-sn-glycero-3-phosphate + CoA. It carries out the reaction 1-(9Z-octadecenoyl)-sn-glycero-3-phosphate + (9Z,12Z)-octadecadienoyl-CoA = 1-(9Z)-octadecenoyl-2-(9Z,12Z)-octadecadienoyl-sn-glycero-3-phosphate + CoA. The catalysed reaction is 1-(9Z-octadecenoyl)-sn-glycero-3-phosphate + tetradecanoyl-CoA = 1-(9Z)-octadecenoyl-2-tetradecanoyl-sn-glycero-3-phosphate + CoA. It catalyses the reaction pentadecanoyl-CoA + 1-(9Z-octadecenoyl)-sn-glycero-3-phosphate = 1-(9Z)-octadecenoyl-2-pentadecanoyl-sn-glycero-3-phosphate + CoA. The enzyme catalyses nonadecanoyl-CoA + 1-(9Z-octadecenoyl)-sn-glycero-3-phosphate = 1-(9Z)-octadecenoyl-2-nonadecanoyl-sn-glycero-3-phosphate + CoA. It carries out the reaction 1-hexadecanoyl-sn-glycero-3-phosphocholine + (9Z)-octadecenoyl-CoA = 1-hexadecanoyl-2-(9Z-octadecenoyl)-sn-glycero-3-phosphocholine + CoA. The catalysed reaction is 1-O-hexadecyl-sn-glycero-3-phosphocholine + acetyl-CoA = 1-O-hexadecyl-2-acetyl-sn-glycero-3-phosphocholine + CoA. It catalyses the reaction 1-O-octadecyl-sn-glycero-3-phosphocholine + acetyl-CoA = 1-O-octadecyl-2-acetyl-sn-glycero-3-phosphocholine + CoA. The enzyme catalyses 1-hexadecanoyl-sn-glycero-3-phosphocholine + acetyl-CoA = 1-hexadecanoyl-2-acetyl-sn-glycero-3-phosphocholine + CoA. It carries out the reaction 1-octadecanoyl-sn-glycero-3-phosphocholine + acetyl-CoA = 1-octadecanoyl-2-acetyl-sn-glycero-3-phosphocholine + CoA. The catalysed reaction is a 1-O-(1Z-alkenyl)-sn-glycero-3-phosphocholine + acetyl-CoA = 1-O-(1Z)-alkenyl-2-acetyl-sn-glycero-3-phosphocholine + CoA. It catalyses the reaction 1-O-octadecyl-sn-glycero-3-phosphocholine + (5Z,8Z,11Z,14Z)-eicosatetraenoyl-CoA = 1-O-octadecyl-2-(5Z,8Z,11Z,14Z)-eicosatetraenoyl-sn-glycero-3-phosphocholine + CoA. The protein operates within lipid metabolism; phospholipid metabolism. Exhibits both acyltransferase and acetyltransferase activities. Activity is calcium-dependent. Catalyzes the conversion of lysophosphatidylcholine (1-acyl-sn-glycero-3-phosphocholine or LPC) into phosphatidylcholine (1,2-diacyl-sn-glycero-3-phosphocholine or PC). Catalyzes the conversion 1-acyl-sn-glycerol-3-phosphate (lysophosphatidic acid or LPA) into 1,2-diacyl-sn-glycerol-3-phosphate (phosphatidic acid or PA) by incorporating an acyl moiety at the sn-2 position of the glycerol backbone. Involved in platelet-activating factor (PAF) biosynthesis by catalyzing the conversion of the PAF precursor, 1-O-alkyl-sn-glycero-3-phosphocholine (lyso-PAF) into 1-O-alkyl-2-acetyl-sn-glycero-3-phosphocholine (PAF). Also converts lyso-PAF to 1-O-alkyl-2-acyl-sn-glycero-3-phosphocholine (PC), a major component of cell membranes and a PAF precursor. Under resting conditions, acyltransferase activity is preferred. Upon acute inflammatory stimulus, acetyltransferase activity is enhanced and PAF synthesis increases. Involved in the regulation of lipid droplet number and size. This chain is Lysophosphatidylcholine acyltransferase 2 (Lpcat2), found in Rattus norvegicus (Rat).